A 370-amino-acid polypeptide reads, in one-letter code: Histidinol-phosphate aminotransferase 3 (370 aa).

Lys-229 is modified (N6-(pyridoxal phosphate)lysine).

It belongs to the class-II pyridoxal-phosphate-dependent aminotransferase family. Histidinol-phosphate aminotransferase subfamily. As to quaternary structure, homodimer. Pyridoxal 5'-phosphate is required as a cofactor.

The catalysed reaction is L-histidinol phosphate + 2-oxoglutarate = 3-(imidazol-4-yl)-2-oxopropyl phosphate + L-glutamate. It participates in amino-acid biosynthesis; L-histidine biosynthesis; L-histidine from 5-phospho-alpha-D-ribose 1-diphosphate: step 7/9. The sequence is that of Histidinol-phosphate aminotransferase 3 (hisC3) from Rhizobium meliloti (strain 1021) (Ensifer meliloti).